We begin with the raw amino-acid sequence, 350 residues long: Leucine-rich repeat-containing protein 23 (350 aa).

Acidic residues predominate over residues 1–54 (MEDETLEDGPEEEEEDEEEGTAEETNQDVTERDEEEEAEKDEEEDKEEEEEAEK). Residues 1 to 64 (MEDETLEDGP…EEPPPHMPLS (64 aa)) are disordered. LRR repeat units lie at residues 107-128 (HLRY…GALT), 129-150 (HLLS…GELP), 151-171 (YLQV…FGHP), 172-193 (RLET…ECSN), 196-216 (SLHT…LNLP), 217-238 (SLRE…EALV), 239-260 (NLTT…SEHL), and 262-283 (ALQY…QKLY). The region spanning 296 to 334 (NPCEEEEGYRMETLIALPQLERLDKDFFEEEEKREAAET) is the LRRCT domain. Residues 314–344 (QLERLDKDFFEEEEKREAAETKKAREEEMAE) adopt a coiled-coil conformation. The tract at residues 325-350 (EEEKREAAETKKAREEEMAEPGEKGN) is disordered.

The protein localises to the cytoplasm. The protein resides in the cytoskeleton. Its subcellular location is the flagellum axoneme. The protein is Leucine-rich repeat-containing protein 23 (lrrc23) of Xenopus tropicalis (Western clawed frog).